The primary structure comprises 194 residues: dCTP deaminase (194 aa).

Residues arginine 110–arginine 115, aspartate 128, valine 136–glutamate 138, tyrosine 171, lysine 178, and glutamine 182 contribute to the dCTP site. Glutamate 138 functions as the Proton donor/acceptor in the catalytic mechanism.

It belongs to the dCTP deaminase family. As to quaternary structure, homotrimer.

The catalysed reaction is dCTP + H2O + H(+) = dUTP + NH4(+). It functions in the pathway pyrimidine metabolism; dUMP biosynthesis; dUMP from dCTP (dUTP route): step 1/2. In terms of biological role, catalyzes the deamination of dCTP to dUTP. In Mannheimia succiniciproducens (strain KCTC 0769BP / MBEL55E), this protein is dCTP deaminase.